The following is a 677-amino-acid chain: Methionine--tRNA ligase (677 aa).

Residues 15-25 (PYANGSIHLGH) carry the 'HIGH' region motif. Zn(2+) contacts are provided by cysteine 146, cysteine 149, cysteine 159, and cysteine 162. The short motif at 333 to 337 (KMSKS) is the 'KMSKS' region element. Residue lysine 336 participates in ATP binding. Residues 575–677 (DFAKVDLRVA…AGAKPGHQVK (103 aa)) enclose the tRNA-binding domain.

This sequence belongs to the class-I aminoacyl-tRNA synthetase family. MetG type 1 subfamily. Homodimer. Zn(2+) is required as a cofactor.

It localises to the cytoplasm. The catalysed reaction is tRNA(Met) + L-methionine + ATP = L-methionyl-tRNA(Met) + AMP + diphosphate. In terms of biological role, is required not only for elongation of protein synthesis but also for the initiation of all mRNA translation through initiator tRNA(fMet) aminoacylation. The polypeptide is Methionine--tRNA ligase (Escherichia fergusonii (strain ATCC 35469 / DSM 13698 / CCUG 18766 / IAM 14443 / JCM 21226 / LMG 7866 / NBRC 102419 / NCTC 12128 / CDC 0568-73)).